The sequence spans 82 residues: Delta-ctenitoxin-Pn2c (82 aa).

An N-terminal signal peptide occupies residues 1-17; it reads MKVAILFLSILVLAVAS. A propeptide spanning residues 18-34 is cleaved from the precursor; it reads ESIEESRDDFAVEELGR. 5 cysteine pairs are disulfide-bonded: cysteine 37/cysteine 51, cysteine 44/cysteine 57, cysteine 48/cysteine 80, cysteine 50/cysteine 65, and cysteine 59/cysteine 63.

As to expression, expressed by the venom gland.

Its subcellular location is the secreted. In terms of biological role, reversible inhibitor of voltage-gated sodium channels (Nav). Delays the fast inactivation kinetics of neuronal-type sodium channels. In vivo, it induces rat penile erection. This effect may be due to the neuronal nitric oxide synthase (NOS1), since one of its selective inhibitor completely abolishes all the toxic effects of the toxin. This toxin also causes scratching, lacrimation, hypersalivation, sweating and agitation followed by spastic paralysis of the anterior and posterior extremities and death at dose levels of 0.24 mg/mouse. It is also insecticidal to the larval and adult forms of the house fly. The polypeptide is Delta-ctenitoxin-Pn2c (Phoneutria nigriventer (Brazilian armed spider)).